The sequence spans 111 residues: Ig kappa chain V-III region PC 2485/PC 4039 (111 aa).

Positions 1–23 (DIVLTQSPASLAVSLGQRATISC) are framework-1. Residues C23 and C92 are joined by a disulfide bond. The interval 24-38 (RASKSVSTSGYSYMH) is complementarity-determining-1. The interval 39–53 (WYQQKPGQPPKLLIY) is framework-2. The segment at 54–60 (LASSLES) is complementarity-determining-2. Residues 61–92 (GVPARFSGSGSGTDFTLNIQPVEEEDAAIYYC) are framework-3. Positions 93–101 (QHSRELPLT) are complementarity-determining-3. The framework-4 stretch occupies residues 102–111 (FGAGTKLELK).

In Mus musculus (Mouse), this protein is Ig kappa chain V-III region PC 2485/PC 4039.